The chain runs to 117 residues: Large ribosomal subunit protein bL19 (117 aa).

The protein belongs to the bacterial ribosomal protein bL19 family.

This protein is located at the 30S-50S ribosomal subunit interface and may play a role in the structure and function of the aminoacyl-tRNA binding site. This Shewanella woodyi (strain ATCC 51908 / MS32) protein is Large ribosomal subunit protein bL19.